The primary structure comprises 137 residues: ATP synthase epsilon chain (137 aa).

This sequence belongs to the ATPase epsilon chain family. As to quaternary structure, F-type ATPases have 2 components, CF(1) - the catalytic core - and CF(0) - the membrane proton channel. CF(1) has five subunits: alpha(3), beta(3), gamma(1), delta(1), epsilon(1). CF(0) has three main subunits: a, b and c.

Its subcellular location is the cell membrane. Its function is as follows. Produces ATP from ADP in the presence of a proton gradient across the membrane. In Desulforudis audaxviator (strain MP104C), this protein is ATP synthase epsilon chain.